We begin with the raw amino-acid sequence, 239 residues long: Probable plastid-lipid-associated protein 8, chloroplastic (239 aa).

Residues 1 to 52 (MAATASSLTIASSFSEPRTQIHSSRRLNLPLQYSIPYKVLRSRSRRLGLVVS) constitute a chloroplast transit peptide. The residue at position 53 (S53) is an N-acetylserine.

This sequence belongs to the PAP/fibrillin family.

The protein localises to the plastid. It is found in the chloroplast. The chain is Probable plastid-lipid-associated protein 8, chloroplastic (PAP8) from Arabidopsis thaliana (Mouse-ear cress).